Here is a 441-residue protein sequence, read N- to C-terminus: Histidinol dehydrogenase (441 aa).

3 residues coordinate substrate: Thr-240, Gln-262, and His-265. Zn(2+) contacts are provided by Gln-262 and His-265. Active-site proton acceptor residues include Glu-332 and His-333. Residues His-333, Asp-366, Glu-420, and His-425 each contribute to the substrate site. Residue Asp-366 participates in Zn(2+) binding. His-425 is a Zn(2+) binding site.

Belongs to the histidinol dehydrogenase family. Requires Zn(2+) as cofactor.

It carries out the reaction L-histidinol + 2 NAD(+) + H2O = L-histidine + 2 NADH + 3 H(+). It functions in the pathway amino-acid biosynthesis; L-histidine biosynthesis; L-histidine from 5-phospho-alpha-D-ribose 1-diphosphate: step 9/9. Functionally, catalyzes the sequential NAD-dependent oxidations of L-histidinol to L-histidinaldehyde and then to L-histidine. The polypeptide is Histidinol dehydrogenase (Streptomyces avermitilis (strain ATCC 31267 / DSM 46492 / JCM 5070 / NBRC 14893 / NCIMB 12804 / NRRL 8165 / MA-4680)).